The primary structure comprises 314 residues: Acetyl-coenzyme A carboxylase carboxyl transferase subunit beta (314 aa).

Residues 44 to 311 (LMNKCPHCGT…VETWQASSPL (268 aa)) form the CoA carboxyltransferase N-terminal domain. Zn(2+) contacts are provided by Cys-48, Cys-51, Cys-67, and Cys-70. The C4-type zinc finger occupies 48–70 (CPHCGTIHYSKDLEKNLRVCKGC).

This sequence belongs to the AccD/PCCB family. As to quaternary structure, acetyl-CoA carboxylase is a heterohexamer composed of biotin carboxyl carrier protein (AccB), biotin carboxylase (AccC) and two subunits each of ACCase subunit alpha (AccA) and ACCase subunit beta (AccD). Zn(2+) serves as cofactor.

The protein localises to the cytoplasm. The enzyme catalyses N(6)-carboxybiotinyl-L-lysyl-[protein] + acetyl-CoA = N(6)-biotinyl-L-lysyl-[protein] + malonyl-CoA. It participates in lipid metabolism; malonyl-CoA biosynthesis; malonyl-CoA from acetyl-CoA: step 1/1. Its function is as follows. Component of the acetyl coenzyme A carboxylase (ACC) complex. Biotin carboxylase (BC) catalyzes the carboxylation of biotin on its carrier protein (BCCP) and then the CO(2) group is transferred by the transcarboxylase to acetyl-CoA to form malonyl-CoA. The polypeptide is Acetyl-coenzyme A carboxylase carboxyl transferase subunit beta (Brevibacillus brevis (strain 47 / JCM 6285 / NBRC 100599)).